A 222-amino-acid polypeptide reads, in one-letter code: Latexin (222 aa).

Residues 1-97 (MEIPPTNYPA…NFTFEGETGK (97 aa)) form the Cystatin LXN-type 1 domain. At Lys-55 the chain carries N6-acetyllysine. The interval 98–117 (NPDEEDNTFYQRLKSMKEPL) is alpha-helical linker. The region spanning 118–222 (EAQNIPDNFG…SRLPKEVQLE (105 aa)) is the Cystatin LXN-type 2 domain.

Belongs to the protease inhibitor I47 (latexin) family. As to expression, highly expressed in heart, prostate, ovary, kidney, pancreas, and colon, moderate or low in other tissues including brain.

Its subcellular location is the cytoplasm. Functionally, hardly reversible, non-competitive, and potent inhibitor of CPA1, CPA2 and CPA4. May play a role in inflammation. The protein is Latexin (LXN) of Homo sapiens (Human).